A 356-amino-acid polypeptide reads, in one-letter code: Histidinol-phosphate aminotransferase (356 aa).

Lysine 214 bears the N6-(pyridoxal phosphate)lysine mark.

Belongs to the class-II pyridoxal-phosphate-dependent aminotransferase family. Histidinol-phosphate aminotransferase subfamily. As to quaternary structure, homodimer. Pyridoxal 5'-phosphate is required as a cofactor.

It carries out the reaction L-histidinol phosphate + 2-oxoglutarate = 3-(imidazol-4-yl)-2-oxopropyl phosphate + L-glutamate. Its pathway is amino-acid biosynthesis; L-histidine biosynthesis; L-histidine from 5-phospho-alpha-D-ribose 1-diphosphate: step 7/9. The protein is Histidinol-phosphate aminotransferase of Shigella sonnei (strain Ss046).